A 271-amino-acid chain; its full sequence is 3-methyl-2-oxobutanoate hydroxymethyltransferase (271 aa).

The Mg(2+) site is built by Asp-51 and Asp-90. 3-methyl-2-oxobutanoate contacts are provided by residues 51 to 52 (DS), Asp-90, and Lys-118. Glu-120 contributes to the Mg(2+) binding site. The active-site Proton acceptor is Glu-186.

Belongs to the PanB family. As to quaternary structure, homodecamer; pentamer of dimers. Mg(2+) serves as cofactor.

Its subcellular location is the cytoplasm. The catalysed reaction is 3-methyl-2-oxobutanoate + (6R)-5,10-methylene-5,6,7,8-tetrahydrofolate + H2O = 2-dehydropantoate + (6S)-5,6,7,8-tetrahydrofolate. Its pathway is cofactor biosynthesis; (R)-pantothenate biosynthesis; (R)-pantoate from 3-methyl-2-oxobutanoate: step 1/2. Catalyzes the reversible reaction in which hydroxymethyl group from 5,10-methylenetetrahydrofolate is transferred onto alpha-ketoisovalerate to form ketopantoate. The protein is 3-methyl-2-oxobutanoate hydroxymethyltransferase of Xanthomonas campestris pv. campestris (strain B100).